The chain runs to 155 residues: Small ribosomal subunit protein uS9 (155 aa).

The protein belongs to the universal ribosomal protein uS9 family.

The protein is Small ribosomal subunit protein uS9 of Rhizobium johnstonii (strain DSM 114642 / LMG 32736 / 3841) (Rhizobium leguminosarum bv. viciae).